We begin with the raw amino-acid sequence, 158 residues long: Phosphopantetheine adenylyltransferase (158 aa).

Residue threonine 9 coordinates substrate. Residues 9 to 10 (TF) and histidine 17 each bind ATP. The substrate site is built by lysine 41, leucine 73, and arginine 87. ATP-binding positions include 88-90 (GVR), glutamate 98, and 123-129 (WSYVSST).

The protein belongs to the bacterial CoaD family. Homohexamer. Requires Mg(2+) as cofactor.

The protein resides in the cytoplasm. The enzyme catalyses (R)-4'-phosphopantetheine + ATP + H(+) = 3'-dephospho-CoA + diphosphate. The protein operates within cofactor biosynthesis; coenzyme A biosynthesis; CoA from (R)-pantothenate: step 4/5. Its function is as follows. Reversibly transfers an adenylyl group from ATP to 4'-phosphopantetheine, yielding dephospho-CoA (dPCoA) and pyrophosphate. In Histophilus somni (strain 2336) (Haemophilus somnus), this protein is Phosphopantetheine adenylyltransferase.